A 76-amino-acid polypeptide reads, in one-letter code: uncharacterized protein (76 aa).

In terms of domain architecture, HTH cro/C1-type spans 6–60 (LKKNRLEKGFTQEEVAKAAQIGRAYYTMIENGTRKPSVIVSKKIGEKLGFDWTIF). The segment at residues 17-36 (QEEVAKAAQIGRAYYTMIEN) is a DNA-binding region (H-T-H motif).

This is an uncharacterized protein from Bacillus subtilis (strain 168).